Reading from the N-terminus, the 451-residue chain is Tubulin beta-1 chain (451 aa).

Positions 1–4 (MREI) match the MREI motif motif. Residues Q11, E69, S138, G142, T143, and G144 each coordinate GTP. E69 serves as a coordination point for Mg(2+). S172 bears the Phosphoserine; by CDK1 mark. Residues N204 and N226 each coordinate GTP. The tract at residues 430 to 451 (AGLEDSEEDVEEAEVEAEDKDH) is disordered. A compositionally biased stretch (acidic residues) spans 433-451 (EDSEEDVEEAEVEAEDKDH). A Phosphoserine modification is found at S435. Position 440 is a 5-glutamyl polyglutamate (E440).

It belongs to the tubulin family. Dimer of alpha and beta chains. A typical microtubule is a hollow water-filled tube with an outer diameter of 25 nm and an inner diameter of 15 nM. Alpha-beta heterodimers associate head-to-tail to form protofilaments running lengthwise along the microtubule wall with the beta-tubulin subunit facing the microtubule plus end conferring a structural polarity. Microtubules usually have 13 protofilaments but different protofilament numbers can be found in some organisms and specialized cells. Interacts with RANBP10. It depends on Mg(2+) as a cofactor. In terms of processing, some glutamate residues at the C-terminus are polyglycylated, resulting in polyglycine chains on the gamma-carboxyl group. Glycylation is mainly limited to tubulin incorporated into axonemes (cilia and flagella) whereas glutamylation is prevalent in neuronal cells, centrioles, axonemes, and the mitotic spindle. Both modifications can coexist on the same protein on adjacent residues, and lowering polyglycylation levels increases polyglutamylation, and reciprocally. Cilia and flagella glycylation is required for their stability and maintenance. Flagella glycylation controls sperm motility. Post-translationally, some glutamate residues at the C-terminus are polyglutamylated, resulting in polyglutamate chains on the gamma-carboxyl group. Polyglutamylation plays a key role in microtubule severing by spastin (SPAST). SPAST preferentially recognizes and acts on microtubules decorated with short polyglutamate tails: severing activity by SPAST increases as the number of glutamates per tubulin rises from one to eight, but decreases beyond this glutamylation threshold. Glutamylation is also involved in cilia motility. Phosphorylated on Ser-172 by CDK1 during the cell cycle, from metaphase to telophase, but not in interphase. This phosphorylation inhibits tubulin incorporation into microtubules.

The protein localises to the cytoplasm. It localises to the cytoskeleton. In terms of biological role, tubulin is the major constituent of microtubules, a cylinder consisting of laterally associated linear protofilaments composed of alpha- and beta-tubulin heterodimers. Microtubules grow by the addition of GTP-tubulin dimers to the microtubule end, where a stabilizing cap forms. Below the cap, tubulin dimers are in GDP-bound state, owing to GTPase activity of alpha-tubulin. This chain is Tubulin beta-1 chain (Tubb1), found in Mus musculus (Mouse).